Reading from the N-terminus, the 612-residue chain is DNA damage checkpoint protein 1 (612 aa).

A Phosphoserine modification is found at Ser436. Residues 576–612 are disordered; it reads GLLNSQNDTSNHKKQDNKEMEDGLGLTQVEKPRGIFD. The span at 585-596 shows a compositional bias: basic and acidic residues; sequence SNHKKQDNKEME.

This sequence belongs to the DDC1 family. In terms of assembly, component of the checkpoint clamp complex composed of DDC1, MEC3 and RAD17. The interaction with MEC3 is performed in a RAD17-dependent manner. The checkpoint clamp complex loads onto DNA in an ATP-dependent manner through its interaction with the RFC-RAD4 checkpoint clamp loader complex. Interacts with the DNA polymerase zeta subunit REV7 and DPB11. Phosphorylated during cell cycle S-phase and in response to DNA damage. This phosphorylation is MEC14 dependent. Also hosphorylated by CDC28.

The protein localises to the cytoplasm. The protein resides in the nucleus. In terms of biological role, component of the checkpoint clamp complex involved in the surveillance mechanism that allows the DNA repair pathways to act to restore the integrity of the DNA prior to DNA synthesis or separation of the replicated chromosomes. Associates with sites of DNA damage and modulates the MEC1 signaling pathway and the activation of RAD53 in response to DNA damage at phase G1. The complex also physically regulates DNA polymerase zeta-dependent mutagenesis by controlling the access of polymerase zeta to damaged DNA. This Saccharomyces cerevisiae (strain ATCC 204508 / S288c) (Baker's yeast) protein is DNA damage checkpoint protein 1 (DDC1).